Reading from the N-terminus, the 305-residue chain is D-alanine--D-alanine ligase (305 aa).

Residues 104–300 (RALFASAGIP…FPELVRWMVE (197 aa)) enclose the ATP-grasp domain. Position 131 to 181 (131 to 181 (LPRPFVVKPLNEGSSVGVFIVRDNQPSPLPDWPFDADEVLVESFIPGRELT)) interacts with ATP. Mg(2+) contacts are provided by Asp249, Glu267, and Asn269.

It belongs to the D-alanine--D-alanine ligase family. It depends on Mg(2+) as a cofactor. Mn(2+) serves as cofactor.

Its subcellular location is the cytoplasm. The catalysed reaction is 2 D-alanine + ATP = D-alanyl-D-alanine + ADP + phosphate + H(+). The protein operates within cell wall biogenesis; peptidoglycan biosynthesis. Functionally, cell wall formation. This is D-alanine--D-alanine ligase from Paramagnetospirillum magneticum (strain ATCC 700264 / AMB-1) (Magnetospirillum magneticum).